The primary structure comprises 100 residues: Aspartyl/glutamyl-tRNA(Asn/Gln) amidotransferase subunit C (100 aa).

This sequence belongs to the GatC family. Heterotrimer of A, B and C subunits.

The catalysed reaction is L-glutamyl-tRNA(Gln) + L-glutamine + ATP + H2O = L-glutaminyl-tRNA(Gln) + L-glutamate + ADP + phosphate + H(+). It catalyses the reaction L-aspartyl-tRNA(Asn) + L-glutamine + ATP + H2O = L-asparaginyl-tRNA(Asn) + L-glutamate + ADP + phosphate + 2 H(+). In terms of biological role, allows the formation of correctly charged Asn-tRNA(Asn) or Gln-tRNA(Gln) through the transamidation of misacylated Asp-tRNA(Asn) or Glu-tRNA(Gln) in organisms which lack either or both of asparaginyl-tRNA or glutaminyl-tRNA synthetases. The reaction takes place in the presence of glutamine and ATP through an activated phospho-Asp-tRNA(Asn) or phospho-Glu-tRNA(Gln). In Streptococcus equi subsp. zooepidemicus (strain MGCS10565), this protein is Aspartyl/glutamyl-tRNA(Asn/Gln) amidotransferase subunit C.